The sequence spans 1036 residues: Protein translocase subunit SecA, chloroplastic (1036 aa).

The transit peptide at 1 to 76 (MESCARSASQ…KIGELMQVRA (76 aa)) directs the protein to the chloroplast. Residue 186–193 (MRTGEGKT) coordinates ATP. The tract at residues 995–1036 (NQEQQQKGKPDSSNVENKRIGDANLNPVSVTESPSSDSPQNT) is disordered. Positions 1000 to 1015 (QKGKPDSSNVENKRIG) are enriched in basic and acidic residues. The span at 1020–1036 (NPVSVTESPSSDSPQNT) shows a compositional bias: polar residues.

The protein belongs to the SecA family.

It is found in the plastid. It localises to the chloroplast stroma. Its subcellular location is the chloroplast thylakoid membrane. The catalysed reaction is ATP + H2O + chloroplast-proteinSide 1 = ADP + phosphate + chloroplast-proteinSide 2.. Has a central role in coupling the hydrolysis of ATP to the transfer of proteins across the thylakoid membrane. This Spinacia oleracea (Spinach) protein is Protein translocase subunit SecA, chloroplastic.